The primary structure comprises 310 residues: Oxygen-dependent coproporphyrinogen-III oxidase (310 aa).

Residue S92 coordinates substrate. A divalent metal cation contacts are provided by H96 and H106. The active-site Proton donor is the H106. 108–110 contacts substrate; the sequence is NVR. A divalent metal cation contacts are provided by H145 and H175. Positions 240 to 275 are important for dimerization; that stretch reads YVEFNLIWDRGTLFGLQSGGRTESILMSMPPLARWE. Substrate is bound at residue 258–260; that stretch reads GGR.

This sequence belongs to the aerobic coproporphyrinogen-III oxidase family. Homodimer. It depends on a divalent metal cation as a cofactor.

It is found in the cytoplasm. The enzyme catalyses coproporphyrinogen III + O2 + 2 H(+) = protoporphyrinogen IX + 2 CO2 + 2 H2O. Its pathway is porphyrin-containing compound metabolism; protoporphyrin-IX biosynthesis; protoporphyrinogen-IX from coproporphyrinogen-III (O2 route): step 1/1. In terms of biological role, involved in the heme biosynthesis. Catalyzes the aerobic oxidative decarboxylation of propionate groups of rings A and B of coproporphyrinogen-III to yield the vinyl groups in protoporphyrinogen-IX. The polypeptide is Oxygen-dependent coproporphyrinogen-III oxidase (Pectobacterium carotovorum subsp. carotovorum (strain PC1)).